Consider the following 1080-residue polypeptide: Carbamoyl phosphate synthase large chain (1080 aa).

Positions 1-403 (MPKRTDLRTI…SLQKAVRGLE (403 aa)) are carboxyphosphate synthetic domain. ATP is bound by residues Arg129, Arg169, Gly175, Gly176, Glu208, Val210, Glu215, Gly241, Val242, His243, Gln285, and Glu299. Residues 133-328 (RVAMQEIGLE…IAKIAAKLAV (196 aa)) form the ATP-grasp 1 domain. Positions 285, 299, and 301 each coordinate Mg(2+). Mn(2+)-binding residues include Gln285, Glu299, and Asn301. The oligomerization domain stretch occupies residues 404–554 (TGKVGLEPTG…YSTYEEECEA (151 aa)). Positions 555–942 (APSDRRKIMI…AFARAQEAGD (388 aa)) are carbamoyl phosphate synthetic domain. The region spanning 679–876 (QRLVQQLGLR…LAKIAARCMT (198 aa)) is the ATP-grasp 2 domain. 10 residues coordinate ATP: Arg715, Arg754, Leu756, Glu761, Gly787, Val788, His789, Ser790, Gln830, and Glu847. Mg(2+)-binding residues include Gln830, Glu847, and Asn849. Mn(2+) contacts are provided by Gln830, Glu847, and Asn849. Positions 943–1080 (IRAPQPGRAF…LQELHKELQV (138 aa)) constitute an MGS-like domain. Residues 943–1080 (IRAPQPGRAF…LQELHKELQV (138 aa)) form an allosteric domain region.

It belongs to the CarB family. As to quaternary structure, composed of two chains; the small (or glutamine) chain promotes the hydrolysis of glutamine to ammonia, which is used by the large (or ammonia) chain to synthesize carbamoyl phosphate. Tetramer of heterodimers (alpha,beta)4. Mg(2+) serves as cofactor. It depends on Mn(2+) as a cofactor.

It carries out the reaction hydrogencarbonate + L-glutamine + 2 ATP + H2O = carbamoyl phosphate + L-glutamate + 2 ADP + phosphate + 2 H(+). The catalysed reaction is hydrogencarbonate + NH4(+) + 2 ATP = carbamoyl phosphate + 2 ADP + phosphate + 2 H(+). It functions in the pathway amino-acid biosynthesis; L-arginine biosynthesis; carbamoyl phosphate from bicarbonate: step 1/1. It participates in pyrimidine metabolism; UMP biosynthesis via de novo pathway; (S)-dihydroorotate from bicarbonate: step 1/3. Large subunit of the glutamine-dependent carbamoyl phosphate synthetase (CPSase). CPSase catalyzes the formation of carbamoyl phosphate from the ammonia moiety of glutamine, carbonate, and phosphate donated by ATP, constituting the first step of 2 biosynthetic pathways, one leading to arginine and/or urea and the other to pyrimidine nucleotides. The large subunit (synthetase) binds the substrates ammonia (free or transferred from glutamine from the small subunit), hydrogencarbonate and ATP and carries out an ATP-coupled ligase reaction, activating hydrogencarbonate by forming carboxy phosphate which reacts with ammonia to form carbamoyl phosphate. The sequence is that of Carbamoyl phosphate synthase large chain from Xylella fastidiosa (strain Temecula1 / ATCC 700964).